Here is a 102-residue protein sequence, read N- to C-terminus: Small ribosomal subunit protein uS10 (102 aa).

The protein belongs to the universal ribosomal protein uS10 family. As to quaternary structure, part of the 30S ribosomal subunit.

Its function is as follows. Involved in the binding of tRNA to the ribosomes. This is Small ribosomal subunit protein uS10 from Lactobacillus delbrueckii subsp. bulgaricus (strain ATCC 11842 / DSM 20081 / BCRC 10696 / JCM 1002 / NBRC 13953 / NCIMB 11778 / NCTC 12712 / WDCM 00102 / Lb 14).